Consider the following 261-residue polypeptide: Calcium-binding protein 8 (261 aa).

Positions 1 to 39 are disordered; it reads MRLPEQPGEGKPENEKKGDGGALGGGEEPPRSQAPDFPT. At 1 to 234 the chain is on the cytoplasmic side; that stretch reads MRLPEQPGEG…QNRQTCVRKS (234 aa). The span at 8–19 shows a compositional bias: basic and acidic residues; it reads GEGKPENEKKGD. 2 EF-hand domains span residues 78 to 113 and 114 to 149; these read EELDEIREAFRVLDRDGNGFISKQELGMAMRSLGYM and PSEVELAIIMQRLDMDGDGQVDFDEFMTILGPKLVS. 9 residues coordinate Ca(2+): Asp-91, Asp-93, Asn-95, Glu-102, Asp-127, Asp-129, Asp-131, Gln-133, and Glu-138. The chain crosses the membrane as a helical; Anchor for type IV membrane protein span at residues 235-255; sequence LICAFAMAFIISVMLIAANQI. Residues 256–261 lie on the Extracellular side of the membrane; sequence LRSGME.

In terms of assembly, interacts with PI4KB. This binding competes with FREQ/NCS1 binding in a calcium-dependent manner. As to expression, brain specific.

Its subcellular location is the golgi apparatus. The protein resides in the trans-Golgi network membrane. It is found in the cytoplasm. It localises to the perinuclear region. The protein localises to the cell membrane. Functionally, negatively regulates Golgi-to-plasma membrane trafficking by interacting with PI4KB and inhibiting its activity. May play a role in the physiology of neurons and is potentially important in memory and learning. The protein is Calcium-binding protein 8 (CALN1) of Homo sapiens (Human).